Reading from the N-terminus, the 358-residue chain is Alanine racemase (358 aa).

K35 functions as the Proton acceptor; specific for D-alanine in the catalytic mechanism. K35 carries the N6-(pyridoxal phosphate)lysine modification. R131 contacts substrate. The active-site Proton acceptor; specific for L-alanine is the Y253. M301 is a substrate binding site.

Belongs to the alanine racemase family. It depends on pyridoxal 5'-phosphate as a cofactor.

It catalyses the reaction L-alanine = D-alanine. Its pathway is amino-acid biosynthesis; D-alanine biosynthesis; D-alanine from L-alanine: step 1/1. In terms of biological role, catalyzes the interconversion of L-alanine and D-alanine. May also act on other amino acids. In Alteromonas mediterranea (strain DSM 17117 / CIP 110805 / LMG 28347 / Deep ecotype), this protein is Alanine racemase (alr).